Reading from the N-terminus, the 99-residue chain is DASH complex subunit DAD1 (99 aa).

The tract at residues 69 to 99 (GMNHQTRENTRDENNKISSSDTEDENNNNKI) is disordered. Over residues 73–83 (QTRENTRDENN) the composition is skewed to basic and acidic residues. Positions 89 to 99 (DTEDENNNNKI) are enriched in acidic residues.

Belongs to the DASH complex DAD1 family. As to quaternary structure, component of the DASH complex consisting of ASK1, DAD1, DAD2, DAD3, DAD4, DAM1, DUO1, HSK3, SPC19 and SPC34, with a stoichiometry of one copy of each subunit per complex. Multiple DASH complexes oligomerize to form a ring that encircles spindle microtubules and organizes the rod-like NDC80 complexes of the outer kinetochore. DASH complex oligomerization strengthens microtubule attachments. On cytoplasmic microtubules, DASH complexes appear to form patches instead of rings.

The protein localises to the chromosome. It localises to the centromere. Its subcellular location is the kinetochore. It is found in the cytoplasm. The protein resides in the cytoskeleton. The protein localises to the spindle. It localises to the nucleus. Its function is as follows. Component of the DASH complex that connects microtubules with kinetochores and couples microtubule depolymerisation to chromosome movement; it is involved in retrieving kinetochores to the spindle poles before their re-orientation on the spindle in early mitosis and allows microtubule depolymerization to pull chromosomes apart and resist detachment during anaphase. Kinetochores, consisting of a centromere-associated inner segment and a microtubule-contacting outer segment, play a crucial role in chromosome segregation by mediating the physical connection between centromeric DNA and microtubules. Kinetochores also serve as an input point for the spindle assembly checkpoint, which delays anaphase until all chromosomes have bioriented on the mitotic spindle. The sequence is that of DASH complex subunit DAD1 from Candida albicans (strain SC5314 / ATCC MYA-2876) (Yeast).